Here is a 404-residue protein sequence, read N- to C-terminus: Argininosuccinate synthase (404 aa).

ATP contacts are provided by residues 10-18 and alanine 37; that span reads AYSGGLDTS. 2 residues coordinate L-citrulline: tyrosine 89 and serine 94. Position 119 (glycine 119) interacts with ATP. Positions 121, 125, and 126 each coordinate L-aspartate. Residue asparagine 125 coordinates L-citrulline. Residues arginine 129, serine 178, serine 187, glutamate 263, and tyrosine 275 each coordinate L-citrulline.

Belongs to the argininosuccinate synthase family. Type 1 subfamily. In terms of assembly, homotetramer.

It is found in the cytoplasm. It catalyses the reaction L-citrulline + L-aspartate + ATP = 2-(N(omega)-L-arginino)succinate + AMP + diphosphate + H(+). It participates in amino-acid biosynthesis; L-arginine biosynthesis; L-arginine from L-ornithine and carbamoyl phosphate: step 2/3. The sequence is that of Argininosuccinate synthase from Photobacterium profundum (strain SS9).